Consider the following 439-residue polypeptide: MDPLSELQDDLTLDDTSQALNQLKLASIDEKNWPSDEMPDFPKSDDSKSSSPEPVTHLKWDDPYYDIARHQIVEVAGDDKYGRKIIVFSACRMPPSHQLDHSKLLGYLKHTLDQYVESDYTLLYLHHGLTSDNKPSLSWLRDAYREFDRKYKKNIKALYIVHPTMFIKTLLILFKPLISFKFGRKIFYVNYLSELSEHVKLEQLGIPRQVLKYDDFLKSTQKSPATAPKPMPPRPPLPNQQFGVSLQHLQEKSPGQDPIPIVLRETVAYLQAHALTTEGIFRRSANTQVVREVQQKYNMGLPVDFDQYNELHLPAVILKTFLRELPEPLLTFDLYPHVVGFLNIDESQRVEVTQQVLQTLPEENYQVLHFLTAFLVQISAHCDQNKMTNTNLAVVFGPNLLWAKDAAITLKAINPINTFTKFLLDHQGELFPSTDAQGV.

An N-acetylmethionine modification is found at methionine 1. Basic and acidic residues predominate over residues 28 to 48; that stretch reads IDEKNWPSDEMPDFPKSDDSK. The interval 28–55 is disordered; sequence IDEKNWPSDEMPDFPKSDDSKSSSPEPV. Serine 44, serine 47, serine 50, and serine 51 each carry phosphoserine. The 156-residue stretch at 63–218 folds into the CRAL-TRIO domain; that stretch reads PYYDIARHQI…QVLKYDDFLK (156 aa). At tyrosine 65 the chain carries Phosphotyrosine. Lysine 80 carries the post-translational modification N6-acetyllysine. Residues 228-238 carry the SH3-binding motif; it reads PKPMPPRPPLP. The Rho-GAP domain occupies 244-431; sequence VSLQHLQEKS…FLLDHQGELF (188 aa).

In terms of assembly, found in a complex with XPO7, EIF4A1, ARHGAP1, VPS26A, VPS29, VPS35 and SFN. Interacts with BNIPL.

The protein resides in the cytoplasm. In terms of biological role, GTPase activator for the Rho, Rac and Cdc42 proteins, converting them to the putatively inactive GDP-bound state. Cdc42 seems to be the preferred substrate. The polypeptide is Rho GTPase-activating protein 1 (Arhgap1) (Mus musculus (Mouse)).